The following is a 269-amino-acid chain: Phosphate import ATP-binding protein PstB 1 (269 aa).

The 240-residue stretch at 25 to 264 folds into the ABC transporter domain; it reads LSTEDLHVFY…PQVDLTNDYI (240 aa). 57-64 serves as a coordination point for ATP; it reads GPSGSGKS.

Belongs to the ABC transporter superfamily. Phosphate importer (TC 3.A.1.7) family. In terms of assembly, the complex is composed of two ATP-binding proteins (PstB), two transmembrane proteins (PstC and PstA) and a solute-binding protein (PstS).

It localises to the cell membrane. It carries out the reaction phosphate(out) + ATP + H2O = ADP + 2 phosphate(in) + H(+). Its function is as follows. Part of the ABC transporter complex PstSACB involved in phosphate import. Responsible for energy coupling to the transport system. The chain is Phosphate import ATP-binding protein PstB 1 from Lactiplantibacillus plantarum (strain ATCC BAA-793 / NCIMB 8826 / WCFS1) (Lactobacillus plantarum).